The sequence spans 497 residues: Glycine receptor subunit beta (497 aa).

The signal sequence occupies residues 1-22; the sequence is MKFLLTTAFLILISLWVEEAYS. Topologically, residues 23–268 are extracellular; sequence KEKSSKKGKG…IFTLRRQVGF (246 aa). Asn-54 carries an N-linked (GlcNAc...) asparagine glycan. Glycine contacts are provided by Arg-108 and Ser-174. Cysteines 183 and 197 form a disulfide. Asn-242 is a glycosylation site (N-linked (GlcNAc...) asparagine). Residues Cys-243 and Cys-255 are joined by a disulfide bond. Position 250 (Thr-250) interacts with glycine. The helical transmembrane segment at 269-289 threads the bilayer; that stretch reads YMMGVYAPTLLIVVLSWLSFW. The Cytoplasmic segment spans residues 290 to 294; it reads INPDA. A helical transmembrane segment spans residues 295 to 315; the sequence is SAARVPLGIFSVLSLASECTT. At 316 to 327 the chain is on the extracellular side; that stretch reads LAAELPKVSYVK. Residues 328–349 form a helical membrane-spanning segment; sequence ALDVWLIACLLFGFASLVEYAV. The Cytoplasmic segment spans residues 350-472; it reads VQVMLNNPKR…KPVIPTAAKR (123 aa). Residue Thr-391 is modified to Phosphothreonine. Residues 473–496 traverse the membrane as a helical segment; sequence IDLYARALFPFCFLFFNVIYWSIY.

The protein belongs to the ligand-gated ion channel (TC 1.A.9) family. Glycine receptor (TC 1.A.9.3) subfamily. GLRB sub-subfamily. Forms heteropentamers with glycin receptor alpha subunits. Heteropentamers with GLRA1 can be composed of two GLRA1 and three GLRB subunits, or three GLRA1 and two GLRB subunits, or four GLRA1 subunits and one GLRB subunit. Forms heteropentamers with GLRA2. Functional GLRB-GLRA2 heteropentamers contain four GLRA2 subunits and one GLRB subunit, although alternative subunit composition cannot be excluded. Forms a heteropentamer with GLRA3. Interacts with GPHN.

The protein localises to the postsynaptic cell membrane. Its subcellular location is the synapse. The protein resides in the cell projection. It localises to the dendrite. It is found in the cell membrane. The protein localises to the cytoplasm. It carries out the reaction chloride(in) = chloride(out). Its activity is regulated as follows. Channel opening is triggered by extracellular glycine. Heteropentameric channels composed of GLRB and GLRA1 are activated by lower glycine levels than homopentameric GLRA1. In terms of biological role, subunit of heteromeric glycine-gated chloride channels. Plays an important role in the down-regulation of neuronal excitability. Contributes to the generation of inhibitory postsynaptic currents. In Homo sapiens (Human), this protein is Glycine receptor subunit beta (GLRB).